The sequence spans 214 residues: Ceramide-1-phosphate transfer protein (214 aa).

5 residues coordinate an N-acylsphingoid base 1-phosphate: aspartate 56, lysine 60, arginine 106, arginine 110, and histidine 150.

This sequence belongs to the GLTP family. As to expression, ubiquitous. Detected in heart, brain, placenta, lung, liver, skeletal muscle, kidney, pancreas, spleen, thymus, prostate, testis, ovary, small intestine, colon and peripheral blood leukocytes.

The protein localises to the cytoplasm. Its subcellular location is the cytosol. It is found in the golgi apparatus. It localises to the trans-Golgi network membrane. The protein resides in the cell membrane. The protein localises to the endosome membrane. Its subcellular location is the nucleus outer membrane. The enzyme catalyses N-(hexadecanoyl)-sphing-4-enine-1-phosphate(in) = N-(hexadecanoyl)-sphing-4-enine-1-phosphate(out). The catalysed reaction is N-(9Z-octadecenoyl)-sphing-4-enine-1-phosphate(in) = N-(9Z-octadecenoyl)-sphing-4-enine-1-phosphate(out). Its function is as follows. Mediates the intracellular transfer of ceramide-1-phosphate (C1P) between organelle membranes and the cell membrane. Required for normal structure of the Golgi stacks. Can bind phosphoceramides with a variety of aliphatic chains, but has a preference for lipids with saturated C16:0 or monounsaturated C18:1 aliphatic chains, and is inefficient with phosphoceramides containing lignoceryl (C24:0). Plays a role in the regulation of the cellular levels of ceramide-1-phosphate, and thereby contributes to the regulation of phospholipase PLA2G4A activity and the release of arachidonic acid. Has no activity with galactosylceramide, lactosylceramide, sphingomyelin, phosphatidylcholine, phosphatidic acid and ceramide. C1P transfer is stimulated by phosphatidylserine in C1P source vesicles. Regulates autophagy, inflammasome mediated IL1B and IL18 processing, and pyroptosis, but not apoptosis. The sequence is that of Ceramide-1-phosphate transfer protein from Homo sapiens (Human).